The primary structure comprises 399 residues: S-adenosylmethionine synthase (399 aa).

Residue H17 coordinates ATP. Position 19 (D19) interacts with Mg(2+). A K(+)-binding site is contributed by E52. The L-methionine site is built by E65 and Q109. Residues 109-119 form a flexible loop region; that stretch reads QSADIAQGVDA. Residues 177–179, 243–244, D252, 258–259, A275, and K279 contribute to the ATP site; these read DSK, KF, and RK. D252 lines the L-methionine pocket. K283 is an L-methionine binding site.

It belongs to the AdoMet synthase family. In terms of assembly, homotetramer; dimer of dimers. It depends on Mg(2+) as a cofactor. K(+) serves as cofactor.

The protein localises to the cytoplasm. The catalysed reaction is L-methionine + ATP + H2O = S-adenosyl-L-methionine + phosphate + diphosphate. It participates in amino-acid biosynthesis; S-adenosyl-L-methionine biosynthesis; S-adenosyl-L-methionine from L-methionine: step 1/1. In terms of biological role, catalyzes the formation of S-adenosylmethionine (AdoMet) from methionine and ATP. The overall synthetic reaction is composed of two sequential steps, AdoMet formation and the subsequent tripolyphosphate hydrolysis which occurs prior to release of AdoMet from the enzyme. The sequence is that of S-adenosylmethionine synthase from Bradyrhizobium sp. (strain BTAi1 / ATCC BAA-1182).